Reading from the N-terminus, the 837-residue chain is Protein translocase subunit SecA (837 aa).

ATP is bound by residues Q85, 103–107, and D493; that span reads GEGKT. 4 residues coordinate Zn(2+): C821, C823, C832, and H833.

This sequence belongs to the SecA family. Monomer and homodimer. Part of the essential Sec protein translocation apparatus which comprises SecA, SecYEG and auxiliary proteins SecDF. Other proteins may also be involved. It depends on Zn(2+) as a cofactor.

It localises to the cell membrane. Its subcellular location is the cytoplasm. It carries out the reaction ATP + H2O + cellular proteinSide 1 = ADP + phosphate + cellular proteinSide 2.. Functionally, part of the Sec protein translocase complex. Interacts with the SecYEG preprotein conducting channel. Has a central role in coupling the hydrolysis of ATP to the transfer of proteins into and across the cell membrane, serving as an ATP-driven molecular motor driving the stepwise translocation of polypeptide chains across the membrane. This chain is Protein translocase subunit SecA, found in Streptococcus pneumoniae (strain P1031).